The primary structure comprises 221 residues: tRNA (guanine-N(7)-)-methyltransferase (221 aa).

Glu-43, Glu-68, and Asp-123 together coordinate S-adenosyl-L-methionine. Asp-123 is an active-site residue. Residues Lys-127, Asp-159, and 199–202 contribute to the substrate site; that span reads TEYE.

Belongs to the class I-like SAM-binding methyltransferase superfamily. TrmB family.

The enzyme catalyses guanosine(46) in tRNA + S-adenosyl-L-methionine = N(7)-methylguanosine(46) in tRNA + S-adenosyl-L-homocysteine. It participates in tRNA modification; N(7)-methylguanine-tRNA biosynthesis. Its function is as follows. Catalyzes the formation of N(7)-methylguanine at position 46 (m7G46) in tRNA. This chain is tRNA (guanine-N(7)-)-methyltransferase, found in Mycoplasma mycoides subsp. mycoides SC (strain CCUG 32753 / NCTC 10114 / PG1).